The primary structure comprises 440 residues: Ferreportin (440 aa).

The Cytoplasmic portion of the chain corresponds to 1–8 (MKVQSLLR). Residues 9–38 (IETQLLLGRLLTRSGDQAWDFVVPFALLVI) traverse the membrane as a helical segment. Ca(2+) is bound at residue Asp24. The Extracellular portion of the chain corresponds to 39–42 (FPGK). A helical transmembrane segment spans residues 43-69 (LQVAAFYYLIVKIGTFLLTPSSGKWID). Over 70–72 (THP) the chain is Cytoplasmic. Residues 73 to 103 (RIQVVKWGVWLQFFAILAGMVFFGMLDGLVR) traverse the membrane as a helical segment. Gln84 lines the Ca(2+) pocket. Residues 104–109 (AGGRES) lie on the Extracellular side of the membrane. A helical transmembrane segment spans residues 110 to 145 (WLLSVLFIALALSGVMASLGSQITDISVGNDLAPSL). Residues 146–147 (VA) are Cytoplasmic-facing. A helical membrane pass occupies residues 148-176 (PEKLTHFNSWLRRIDLATEVGAPILAGAL). Residues 177 to 186 (FAFHPEQLPL) lie on the Extracellular side of the membrane. The helical transmembrane segment at 187 to 213 (AGLFLIGLWNLVSFVPEYFLLRNVIQR) threads the bilayer. Ca(2+) is bound by residues Asn196 and Glu203. Topologically, residues 214 to 242 (SGLKIKVLTEAQSWKDTFHINLRGSFSDP) are cytoplasmic. A helical transmembrane segment spans residues 243–271 (IFWLILSYALLWLSVLSPHGVLLAAYLKD). The Extracellular segment spans residues 272–276 (EMRLP). Residues 277–304 (ETEIGLFRGLGAVFGLISTVSFPYLVRR) form a helical membrane-spanning segment. Residues 305–306 (LG) are Cytoplasmic-facing. Residues 307-329 (LISSSRWHLGFQGVTLGIAVTAF) traverse the membrane as a helical segment. Residues 330-335 (AMGSTA) are Extracellular-facing. Residues 336-365 (SVYVFLGCILLSRVGLYGFSNGEFELRQRL) form a helical membrane-spanning segment. Residues 366 to 370 (IPEGR) are Cytoplasmic-facing. A helical transmembrane segment spans residues 371–395 (RGELNSLSSLTTTSATLILFSAGSL). Residues 396–398 (LPQ) lie on the Extracellular side of the membrane. A helical membrane pass occupies residues 399 to 424 (TEDFKYLVYVSLAAVLLANVVFIKWS). Residues 425–440 (SRQGVVTSGAAEPVES) are Cytoplasmic-facing.

This sequence belongs to the ferroportin (FP) (TC 2.A.100) family. Ca(2+) is required as a cofactor.

The protein resides in the cell membrane. Functionally, iron transpoter that exports Fe(2+) from the cell. Also binds to Co(2+) and Ni(2+). May act as a multivalent divalent metal transporter. The transporter is composed of 12 transmembrane (TM) helices organized into N-terminal (TM1-6) and C-terminal (TM7-12) domains. The substrate-binding site is formed at the interface of the two domains and is alternately accessible from either side of the membrane. The transport cycle is viewed as a series of ligand-induced conformational changes that include open outward and open inward states. This chain is Ferreportin (slc39), found in Bdellovibrio bacteriovorus (strain ATCC 15356 / DSM 50701 / NCIMB 9529 / HD100).